A 153-amino-acid polypeptide reads, in one-letter code: MVTFNCEVCNDTVPKKNTEKHYYRCPNAYYTCIDCSKTFEDGVSYKNHTSCISEDEKYQKALYKGNKKQKQKQQQKQQQKQHQHQPVATPAKKVEKPVIKKAEKVEKTSNGIELHKGKSLYKILKTMKDKGAKKTFLKSLVVDSEGQIRYAKE.

C2HC LYAR-type zinc fingers lie at residues 1–26 and 27–52; these read MVTFNCEVCNDTVPKKNTEKHYYRCP and NAYYTCIDCSKTFEDGVSYKNHTSCI. Zn(2+) is bound by residues C6, C9, H21, C25, C32, C35, H48, and C51. The segment at 63 to 96 is disordered; the sequence is YKGNKKQKQKQQQKQQQKQHQHQPVATPAKKVEK. A compositionally biased stretch (basic residues) spans 65–83; it reads GNKKQKQKQQQKQQQKQHQ.

This sequence belongs to the UPF0743 family.

It is found in the nucleus. The protein localises to the nucleolus. This is UPF0743 protein YCR087C-A from Saccharomyces cerevisiae (strain ATCC 204508 / S288c) (Baker's yeast).